The primary structure comprises 389 residues: Major outer membrane porin (389 aa).

A signal peptide spans 1 to 23 (MKKLLKSALLSAAFAGSVGSLQA).

This sequence belongs to the chlamydial porin (CP) (TC 1.B.2) family. As to quaternary structure, part of a disulfide cross-linked outer membrane complex (COMC) composed of the major outer membrane porin (MOMP), the small cysteine-rich protein (OmcA) and the large cysteine-rich periplasmic protein (OmcB).

Its subcellular location is the cell outer membrane. Functionally, in elementary bodies (EBs, the infectious stage, which is able to survive outside the host cell) provides the structural integrity of the outer envelope through disulfide cross-links with the small cysteine-rich protein and the large cysteine-rich periplasmic protein. It has been described in publications as the Sarkosyl-insoluble COMC (Chlamydia outer membrane complex), and serves as the functional equivalent of peptidoglycan. In terms of biological role, permits diffusion of specific solutes through the outer membrane. This Chlamydia pneumoniae (Chlamydophila pneumoniae) protein is Major outer membrane porin (ompA).